The sequence spans 294 residues: Probable endonuclease 4 (294 aa).

Zn(2+)-binding residues include His71, His111, Glu148, Asp182, His185, His217, Asp230, His232, and Glu262.

This sequence belongs to the AP endonuclease 2 family. It depends on Zn(2+) as a cofactor.

It carries out the reaction Endonucleolytic cleavage to 5'-phosphooligonucleotide end-products.. Its function is as follows. Endonuclease IV plays a role in DNA repair. It cleaves phosphodiester bonds at apurinic or apyrimidinic (AP) sites, generating a 3'-hydroxyl group and a 5'-terminal sugar phosphate. This is Probable endonuclease 4 from Acholeplasma laidlawii (strain PG-8A).